Here is a 150-residue protein sequence, read N- to C-terminus: MKCPFCGGESRVLESRPASDEEAVRRRRECLACGRRFTTMERVEVPPLIVVKKDGRREPFNRDKLLTGVLKACEKRPVPMEVIEKLADDIERDLRSSLDREVPSVVIGERVMEALRQVDGVAYVRFASVYREFKDLNEFREQLEQLLKSR.

Residues 3–33 (CPFCGGESRVLESRPASDEEAVRRRRECLAC) fold into a zinc finger. The region spanning 48 to 138 (LIVVKKDGRR…VYREFKDLNE (91 aa)) is the ATP-cone domain.

The protein belongs to the NrdR family. Zn(2+) serves as cofactor.

Functionally, negatively regulates transcription of bacterial ribonucleotide reductase nrd genes and operons by binding to NrdR-boxes. In Symbiobacterium thermophilum (strain DSM 24528 / JCM 14929 / IAM 14863 / T), this protein is Transcriptional repressor NrdR.